The sequence spans 565 residues: Periplasmic trehalase (565 aa).

The first 30 residues, 1–30 (MKSPAPSRPQKMALIPACIFLCFAALSVQA), serve as a signal peptide directing secretion. Residues Arg152, 159 to 160 (WD), Asn196, 205 to 207 (RSQ), 277 to 279 (RPE), and Gly310 contribute to the substrate site. Residues Asp312 and Glu496 each act as proton donor/acceptor in the active site. Glu511 serves as a coordination point for substrate. A disordered region spans residues 539-565 (CDNVPATRPLSESTTQPLKQKEAEPTP).

The protein belongs to the glycosyl hydrolase 37 family. As to quaternary structure, monomer.

The protein resides in the periplasm. The enzyme catalyses alpha,alpha-trehalose + H2O = alpha-D-glucose + beta-D-glucose. In terms of biological role, provides the cells with the ability to utilize trehalose at high osmolarity by splitting it into glucose molecules that can subsequently be taken up by the phosphotransferase-mediated uptake system. This Escherichia coli O45:K1 (strain S88 / ExPEC) protein is Periplasmic trehalase.